The sequence spans 254 residues: Ubiquinone biosynthesis O-methyltransferase (254 aa).

R47, G76, D97, and L141 together coordinate S-adenosyl-L-methionine.

It belongs to the methyltransferase superfamily. UbiG/COQ3 family.

The catalysed reaction is a 3-demethylubiquinol + S-adenosyl-L-methionine = a ubiquinol + S-adenosyl-L-homocysteine + H(+). It carries out the reaction a 3-(all-trans-polyprenyl)benzene-1,2-diol + S-adenosyl-L-methionine = a 2-methoxy-6-(all-trans-polyprenyl)phenol + S-adenosyl-L-homocysteine + H(+). It functions in the pathway cofactor biosynthesis; ubiquinone biosynthesis. Its function is as follows. O-methyltransferase that catalyzes the 2 O-methylation steps in the ubiquinone biosynthetic pathway. The chain is Ubiquinone biosynthesis O-methyltransferase from Maricaulis maris (strain MCS10) (Caulobacter maris).